The primary structure comprises 196 residues: dITP/XTP pyrophosphatase (196 aa).

Residue 7 to 12 (THNPGK) participates in substrate binding. Positions 40 and 69 each coordinate Mg(2+). Aspartate 69 (proton acceptor) is an active-site residue. Substrate-binding positions include serine 70, 150–153 (FGYD), lysine 173, and 178–179 (HR).

It belongs to the HAM1 NTPase family. As to quaternary structure, homodimer. Requires Mg(2+) as cofactor.

It carries out the reaction XTP + H2O = XMP + diphosphate + H(+). The enzyme catalyses dITP + H2O = dIMP + diphosphate + H(+). The catalysed reaction is ITP + H2O = IMP + diphosphate + H(+). Pyrophosphatase that catalyzes the hydrolysis of nucleoside triphosphates to their monophosphate derivatives, with a high preference for the non-canonical purine nucleotides XTP (xanthosine triphosphate), dITP (deoxyinosine triphosphate) and ITP. Seems to function as a house-cleaning enzyme that removes non-canonical purine nucleotides from the nucleotide pool, thus preventing their incorporation into DNA/RNA and avoiding chromosomal lesions. The chain is dITP/XTP pyrophosphatase from Exiguobacterium sp. (strain ATCC BAA-1283 / AT1b).